Reading from the N-terminus, the 273-residue chain is Dermonecrotic toxin LhSicTox-alphaIA1ii (273 aa).

His5 is a catalytic residue. Mg(2+)-binding residues include Glu25 and Asp27. The active-site Nucleophile is the His41. Cystine bridges form between Cys45-Cys51 and Cys47-Cys190. Asp85 is a Mg(2+) binding site.

Belongs to the arthropod phospholipase D family. Class II subfamily. Mg(2+) serves as cofactor. As to expression, expressed by the venom gland.

The protein localises to the secreted. The catalysed reaction is an N-(acyl)-sphingosylphosphocholine = an N-(acyl)-sphingosyl-1,3-cyclic phosphate + choline. The enzyme catalyses an N-(acyl)-sphingosylphosphoethanolamine = an N-(acyl)-sphingosyl-1,3-cyclic phosphate + ethanolamine. It carries out the reaction a 1-acyl-sn-glycero-3-phosphocholine = a 1-acyl-sn-glycero-2,3-cyclic phosphate + choline. It catalyses the reaction a 1-acyl-sn-glycero-3-phosphoethanolamine = a 1-acyl-sn-glycero-2,3-cyclic phosphate + ethanolamine. Its function is as follows. Dermonecrotic toxins cleave the phosphodiester linkage between the phosphate and headgroup of certain phospholipids (sphingolipid and lysolipid substrates), forming an alcohol (often choline) and a cyclic phosphate. This toxin acts on sphingomyelin (SM). It may also act on ceramide phosphoethanolamine (CPE), lysophosphatidylcholine (LPC) and lysophosphatidylethanolamine (LPE), but not on lysophosphatidylserine (LPS), and lysophosphatidylglycerol (LPG). It acts by transphosphatidylation, releasing exclusively cyclic phosphate products as second products. Induces dermonecrosis, hemolysis, increased vascular permeability, edema, inflammatory response, and platelet aggregation. This chain is Dermonecrotic toxin LhSicTox-alphaIA1ii, found in Loxosceles hirsuta (Recluse spider).